The chain runs to 121 residues: Histone H2B, sperm (121 aa).

The segment at Met-1 to Lys-30 is disordered. Pro-2 carries the post-translational modification N,N-dimethylproline. O-linked (GlcNAc) serine glycosylation occurs at Ser-108. Lys-116 is covalently cross-linked (Glycyl lysine isopeptide (Lys-Gly) (interchain with G-Cter in ubiquitin)).

The protein belongs to the histone H2B family. In terms of assembly, the nucleosome is a histone octamer containing two molecules each of H2A, H2B, H3 and H4 assembled in one H3-H4 heterotetramer and two H2A-H2B heterodimers. The octamer wraps approximately 147 bp of DNA. In terms of processing, monoubiquitination of Lys-116 gives a specific tag for epigenetic transcriptional activation and is also prerequisite for histone H3 'Lys-4' and 'Lys-79' methylation. GlcNAcylation at Ser-108 promotes monoubiquitination of Lys-116. It fluctuates in response to extracellular glucose, and associates with transcribed genes.

The protein localises to the nucleus. It is found in the chromosome. Core component of nucleosome. Nucleosomes wrap and compact DNA into chromatin, limiting DNA accessibility to the cellular machineries which require DNA as a template. Histones thereby play a central role in transcription regulation, DNA repair, DNA replication and chromosomal stability. DNA accessibility is regulated via a complex set of post-translational modifications of histones, also called histone code, and nucleosome remodeling. This Marthasterias glacialis (Spiny starfish) protein is Histone H2B, sperm.